The chain runs to 271 residues: Interleukin-1 alpha (271 aa).

Residues methionine 1–arginine 112 constitute a propeptide that is removed on maturation. An N6-acetyllysine modification is found at lysine 82. Positions lysine 82–leucine 86 are nuclear localization signal (NLS). A Phosphoserine modification is found at serine 87. Asparagine 102 and asparagine 141 each carry an N-linked (GlcNAc...) asparagine glycan.

This sequence belongs to the IL-1 family. Monomer. Interacts with TMED10; the interaction mediates the translocation from the cytoplasm into the ERGIC (endoplasmic reticulum-Golgi intermediate compartment) and thereby secretion. Interacts with IL1R1. Interacts with S100A13; this interaction is the first step in the export of IL1A, followed by direct translocation of this complex across the plasma membrane. Acetylated within its nuclear localization sequence, which impacts subcellular localization. Post-translationally, proteolytic processed by CAPN1 in a calcium-dependent manner. Cleavage from 31 kDa precursor to 18 kDa biologically active molecules. In terms of processing, phosphorylated. Phosphorylation greatly enhances susceptibility to digestion and promotes the conversion of pre-IL1A alpha to the biologically active IL1A.

It localises to the nucleus. It is found in the cytoplasm. The protein localises to the secreted. Its function is as follows. Cytokine constitutively present intracellularly in nearly all resting non-hematopoietic cells that plays an important role in inflammation and bridges the innate and adaptive immune systems. After binding to its receptor IL1R1 together with its accessory protein IL1RAP, forms the high affinity interleukin-1 receptor complex. Signaling involves the recruitment of adapter molecules such as MYD88, IRAK1 or IRAK4. In turn, mediates the activation of NF-kappa-B and the three MAPK pathways p38, p42/p44 and JNK pathways. Within the cell, acts as an alarmin and cell death results in its liberation in the extracellular space after disruption of the cell membrane to induce inflammation and alert the host to injury or damage. In addition to its role as a danger signal, which occurs when the cytokine is passively released by cell necrosis, directly senses DNA damage and acts as signal for genotoxic stress without loss of cell integrity. The chain is Interleukin-1 alpha (IL1A) from Cercocebus atys (Sooty mangabey).